The following is a 217-amino-acid chain: Biogenesis of lysosome-related organelles complex 1 subunit 4 (217 aa).

The segment at 1 to 57 (MEGSFSDGGALPEGLAEEAEPQGAAWSGDSGTVSQSHSSASGPWEDEGAEDGAPGRD) is disordered. Residues 29–41 (DSGTVSQSHSSAS) show a composition bias toward polar residues. Residues 136–165 (DRLEAFVRMVGGRVARMEEQVTKAEAELGT) are a coiled coil. Thr-165 carries the phosphothreonine modification.

This sequence belongs to the BLOC1S4 family. In terms of assembly, interacts with BLOC1S5 and BLOC1S6. Component of the biogenesis of lysosome-related organelles complex 1 (BLOC-1) composed of BLOC1S1, BLOC1S2, BLOC1S3, BLOC1S4, BLOC1S5, BLOC1S6, DTNBP1/BLOC1S7 and SNAPIN/BLOC1S8. Octamer composed of one copy each BLOC1S1, BLOC1S2, BLOC1S3, BLOC1S4, BLOC1S5, BLOC1S6, DTNBP1/BLOC1S7 and SNAPIN/BLOC1S8. The BLOC-1 complex associates with the AP-3 protein complex and membrane protein cargos.

Its subcellular location is the cytoplasm. Functionally, component of the BLOC-1 complex, a complex that is required for normal biogenesis of lysosome-related organelles (LRO), such as platelet dense granules and melanosomes. In concert with the AP-3 complex, the BLOC-1 complex is required to target membrane protein cargos into vesicles assembled at cell bodies for delivery into neurites and nerve terminals. The BLOC-1 complex, in association with SNARE proteins, is also proposed to be involved in neurite extension. Plays a role in intracellular vesicle trafficking. This chain is Biogenesis of lysosome-related organelles complex 1 subunit 4 (BLOC1S4), found in Homo sapiens (Human).